We begin with the raw amino-acid sequence, 366 residues long: D-alanine--D-alanine ligase (366 aa).

Positions 145–348 constitute an ATP-grasp domain; it reads KRLLDDAGLA…YQSLITKLIE (204 aa). Residue 175 to 230 participates in ATP binding; it reads VEQLGLPLFIKPANLGSSVGISKVNNEAEFNAALSMAFEYDLKVIIESAIVGREIE. Positions 302, 315, and 317 each coordinate Mg(2+).

The protein belongs to the D-alanine--D-alanine ligase family. Requires Mg(2+) as cofactor. Mn(2+) is required as a cofactor.

The protein resides in the cytoplasm. It catalyses the reaction 2 D-alanine + ATP = D-alanyl-D-alanine + ADP + phosphate + H(+). It functions in the pathway cell wall biogenesis; peptidoglycan biosynthesis. Its function is as follows. Cell wall formation. The chain is D-alanine--D-alanine ligase from Proteus mirabilis (strain HI4320).